The primary structure comprises 387 residues: Ferrochelatase (387 aa).

Residues H196 and E277 each contribute to the Fe cation site.

The protein belongs to the ferrochelatase family.

Its subcellular location is the cytoplasm. The catalysed reaction is heme b + 2 H(+) = protoporphyrin IX + Fe(2+). The protein operates within porphyrin-containing compound metabolism; protoheme biosynthesis; protoheme from protoporphyrin-IX: step 1/1. Its function is as follows. Catalyzes the ferrous insertion into protoporphyrin IX. The chain is Ferrochelatase from Synechococcus sp. (strain RCC307).